The following is a 122-amino-acid chain: Small ribosomal subunit protein bS6 (122 aa).

It belongs to the bacterial ribosomal protein bS6 family.

Its function is as follows. Binds together with bS18 to 16S ribosomal RNA. In Methylibium petroleiphilum (strain ATCC BAA-1232 / LMG 22953 / PM1), this protein is Small ribosomal subunit protein bS6.